Consider the following 160-residue polypeptide: UPF0178 protein PA14_69280 (160 aa).

It belongs to the UPF0178 family.

This Pseudomonas aeruginosa (strain UCBPP-PA14) protein is UPF0178 protein PA14_69280.